The following is a 182-amino-acid chain: RNA pyrophosphohydrolase (182 aa).

Residues 6 to 149 (GYRPNVGIIL…KRLVYEQALN (144 aa)) form the Nudix hydrolase domain. Residues 38–59 (GGIKRGETPEEAMFRELYEEVG) carry the Nudix box motif. Residues 162–182 (PRHKKEQEPFSDVVDSVRSEE) are disordered.

This sequence belongs to the Nudix hydrolase family. RppH subfamily. A divalent metal cation serves as cofactor.

Its function is as follows. Accelerates the degradation of transcripts by removing pyrophosphate from the 5'-end of triphosphorylated RNA, leading to a more labile monophosphorylated state that can stimulate subsequent ribonuclease cleavage. This is RNA pyrophosphohydrolase from Dechloromonas aromatica (strain RCB).